A 497-amino-acid chain; its full sequence is MAAAGGAVLLLVLATATSVTGQHDYSDALHKSILFFEGQRSGRLPPDQRLRWRRDSALNDGATAGVDLTGGYYDAGDNVKFGFPMAFTATLMSWGLIDFGRSFGAHAAEAREAVRWATDYLMKATATPNTVYVQVGDAFRDHSCWERPEDMDTPRTVYKVDPSHPGSDVAAETAAALAAASIVFRDADPDYSNRLLDRAIQVFEFADKYRGPYSSSLHAAVCPCYCDYSGYKDELLWGAAWLHKASRRREYRDYIKRNEVVLGASEAINEFGWDNKHAGINVLISKEVLMGKDEYFQSFRVNADNFICTLLPGISNHPQIQYSPGGLLFKVGNSNMQHVTSLSFLLLAYSNYLSHANVRVPCGTSSASPVQLRRVAKRQVDYILGDNPLRMSYMVGYGSRYPLRIHHRGSSLPSVAAHPAQIGCKAGATYYASAAPNPNLLVGAVVGGPSNTSDAFPDARAVFQQSEPTTYINAPLLGLLAYFSAHPNLAQSDLLYD.

The first 21 residues, 1 to 21 (MAAAGGAVLLLVLATATSVTG), serve as a signal peptide directing secretion. Catalysis depends on Asp-77, which acts as the Nucleophile. Residue His-406 is part of the active site. Asn-451 carries N-linked (GlcNAc...) asparagine glycosylation. Residues Asp-458 and Glu-467 contribute to the active site.

This sequence belongs to the glycosyl hydrolase 9 (cellulase E) family.

The protein resides in the secreted. The catalysed reaction is Endohydrolysis of (1-&gt;4)-beta-D-glucosidic linkages in cellulose, lichenin and cereal beta-D-glucans.. This Oryza sativa subsp. japonica (Rice) protein is Endoglucanase 17 (GLU13).